A 497-amino-acid polypeptide reads, in one-letter code: Bifunctional protein GlmU (497 aa).

The pyrophosphorylase stretch occupies residues 1-252 (MSQPSARPSA…VWEVEGANDR (252 aa)). UDP-N-acetyl-alpha-D-glucosamine is bound by residues 14–17 (LAAG), lysine 28, glutamine 86, 91–92 (GT), 115–117 (YGD), glycine 154, glutamate 169, asparagine 192, and asparagine 250. Residue aspartate 117 coordinates Mg(2+). Position 250 (asparagine 250) interacts with Mg(2+). The interval 253 to 273 (RQLSDLGRRLNERVLRHWMKE) is linker. The segment at 274 to 497 (GVTVVDPSST…AGAEGSGAQG (224 aa)) is N-acetyltransferase. Residues arginine 355 and lysine 373 each coordinate UDP-N-acetyl-alpha-D-glucosamine. The active-site Proton acceptor is histidine 385. UDP-N-acetyl-alpha-D-glucosamine-binding residues include tyrosine 388 and asparagine 399. Residues 408–409 (NY), serine 427, and alanine 445 each bind acetyl-CoA. The segment at 473-497 (PAKRPGTSSAEAARAAGAEGSGAQG) is disordered. A compositionally biased stretch (low complexity) spans 480-490 (SSAEAARAAGA).

In the N-terminal section; belongs to the N-acetylglucosamine-1-phosphate uridyltransferase family. This sequence in the C-terminal section; belongs to the transferase hexapeptide repeat family. In terms of assembly, homotrimer. Mg(2+) serves as cofactor.

The protein localises to the cytoplasm. The catalysed reaction is alpha-D-glucosamine 1-phosphate + acetyl-CoA = N-acetyl-alpha-D-glucosamine 1-phosphate + CoA + H(+). It carries out the reaction N-acetyl-alpha-D-glucosamine 1-phosphate + UTP + H(+) = UDP-N-acetyl-alpha-D-glucosamine + diphosphate. It functions in the pathway nucleotide-sugar biosynthesis; UDP-N-acetyl-alpha-D-glucosamine biosynthesis; N-acetyl-alpha-D-glucosamine 1-phosphate from alpha-D-glucosamine 6-phosphate (route II): step 2/2. Its pathway is nucleotide-sugar biosynthesis; UDP-N-acetyl-alpha-D-glucosamine biosynthesis; UDP-N-acetyl-alpha-D-glucosamine from N-acetyl-alpha-D-glucosamine 1-phosphate: step 1/1. It participates in bacterial outer membrane biogenesis; LPS lipid A biosynthesis. Functionally, catalyzes the last two sequential reactions in the de novo biosynthetic pathway for UDP-N-acetylglucosamine (UDP-GlcNAc). The C-terminal domain catalyzes the transfer of acetyl group from acetyl coenzyme A to glucosamine-1-phosphate (GlcN-1-P) to produce N-acetylglucosamine-1-phosphate (GlcNAc-1-P), which is converted into UDP-GlcNAc by the transfer of uridine 5-monophosphate (from uridine 5-triphosphate), a reaction catalyzed by the N-terminal domain. In Micrococcus luteus (strain ATCC 4698 / DSM 20030 / JCM 1464 / CCM 169 / CCUG 5858 / IAM 1056 / NBRC 3333 / NCIMB 9278 / NCTC 2665 / VKM Ac-2230) (Micrococcus lysodeikticus), this protein is Bifunctional protein GlmU.